The primary structure comprises 150 residues: Ribosome maturation factor RimP (150 aa).

Belongs to the RimP family.

Its subcellular location is the cytoplasm. Functionally, required for maturation of 30S ribosomal subunits. The chain is Ribosome maturation factor RimP from Hahella chejuensis (strain KCTC 2396).